The primary structure comprises 153 residues: Ribosomal RNA large subunit methyltransferase H (153 aa).

2 residues coordinate S-adenosyl-L-methionine: Leu71 and Gly102.

This sequence belongs to the RNA methyltransferase RlmH family. Homodimer.

Its subcellular location is the cytoplasm. The enzyme catalyses pseudouridine(1915) in 23S rRNA + S-adenosyl-L-methionine = N(3)-methylpseudouridine(1915) in 23S rRNA + S-adenosyl-L-homocysteine + H(+). Functionally, specifically methylates the pseudouridine at position 1915 (m3Psi1915) in 23S rRNA. The chain is Ribosomal RNA large subunit methyltransferase H from Anaeromyxobacter dehalogenans (strain 2CP-C).